Reading from the N-terminus, the 226-residue chain is Phosphoglycolate phosphatase (226 aa).

The Nucleophile role is filled by Asp-5. Asp-5 and Asp-7 together coordinate Mg(2+). Lys-142 provides a ligand contact to substrate. Mg(2+) is bound by residues Asp-164 and Asp-168.

This sequence belongs to the archaeal SPP-like hydrolase family. Requires Mg(2+) as cofactor.

The enzyme catalyses 2-phosphoglycolate + H2O = glycolate + phosphate. Its function is as follows. Catalyzes the dephosphorylation of 2-phosphoglycolate. This Sulfurisphaera tokodaii (strain DSM 16993 / JCM 10545 / NBRC 100140 / 7) (Sulfolobus tokodaii) protein is Phosphoglycolate phosphatase.